The primary structure comprises 249 residues: Probable transcriptional regulatory protein LIC_12886 (249 aa).

Belongs to the TACO1 family.

The protein resides in the cytoplasm. In Leptospira interrogans serogroup Icterohaemorrhagiae serovar copenhageni (strain Fiocruz L1-130), this protein is Probable transcriptional regulatory protein LIC_12886.